Reading from the N-terminus, the 100-residue chain is Small ribosomal subunit protein uS14c (100 aa).

Positions 1–54 are disordered; it reads MARKSLIQRERKRQKLEQKFHSIRRSSKKEISKVSSLSGKWEIHGKLQSPPRNS.

Belongs to the universal ribosomal protein uS14 family. In terms of assembly, part of the 30S ribosomal subunit.

Its subcellular location is the plastid. The protein localises to the chloroplast. In terms of biological role, binds 16S rRNA, required for the assembly of 30S particles. The protein is Small ribosomal subunit protein uS14c of Piper cenocladum (Ant piper).